A 310-amino-acid chain; its full sequence is Serine/threonine-protein phosphatase 4 catalytic subunit (310 aa).

Residues D53, H55, D81, and N113 each contribute to the Mn(2+) site. H114 serves as the catalytic Proton donor. H163 and H237 together coordinate Mn(2+). L310 is subject to Leucine methyl ester.

This sequence belongs to the PPP phosphatase family. PP-4 (PP-X) subfamily. Catalytic subunit of the histone H2A phosphatase complex (HTP-C) containing PPH3, PSY2 and PSY4. Mn(2+) is required as a cofactor.

Its subcellular location is the cytoplasm. It localises to the nucleus. It carries out the reaction O-phospho-L-seryl-[protein] + H2O = L-seryl-[protein] + phosphate. The catalysed reaction is O-phospho-L-threonyl-[protein] + H2O = L-threonyl-[protein] + phosphate. Functionally, involved in the dephosphorylation and activation of the transcription factor GLN3 in response to nutrient availability. Forms the histone H2A phosphatase complex in association with the regulatory subunits PSY2 and PSY4, which dephosphorylates H2AS128ph (gamma-H2A) that has been displaced from sites of DNA lesions in the double-stranded DNA break repair process. Dephosphorylation is necessary for efficient recovery from the DNA damage checkpoint. This Eremothecium gossypii (strain ATCC 10895 / CBS 109.51 / FGSC 9923 / NRRL Y-1056) (Yeast) protein is Serine/threonine-protein phosphatase 4 catalytic subunit (PPH3).